A 3078-amino-acid chain; its full sequence is MKRGRRKVDGDGNCPSNGMASSQRNDNSNKNIVRKIYVIEDDNTDSEDKKICKNRRLDLHNSSSRESKDMKLSEEPRHINEKCINDNNKINNNNPEKDIIDLSDSSNDMKHKNNNNNNNNKSHTKNNIFFQTNNPDTSYKIKKDSTTKQENTSSSLHDVSINDNHNEVNNENVLVGGNDSINNGNYINKKTNNLQNVKNTTNSKRKKYNSNNTMPTKKYNNTHQDNNITENREKENTSSIYDNTCNKNNTVHISRGKKNKSSISIHPMRLRNSTVSNCKKENSQGDEEKENENNIPNKRQTRNIGKINVHIEKEERGNQENIQQNDSVINNNIIENKTDDKKPNIANKKSIQKRTNKRMNVETFDICAEQNGNSKKNNSTLVNTNPNDLYDDINVKTDCDWKKYYLSNVISFLNCKYVDLNNYLLSMKYKSVKNIDILDYIHTKYYDNLKYIYFDLHLEKNSSKISSGDLYVILNPILNVTYYSKMIDYCMSCIPSNCRRRITRKRFFNSNATLTDNSNINSIRTDNWYTTHYRNIHESEIFDYQWSIPTEPKGSFYRTVNAYRINRYFMYRNTLVARTINLNATNNVSVFYTINKISYEYNIKISFDNFWNIADPENNYVYYYYFDFDTNQYYTYKITKIGRSGNSNLIKEFLIKMKPTFWCLQDIIIYSSLIFHSTYMRYEKMIHFVTFHDYLQLFVQEHLKQFLELFDALQEPIPKKFLRKIKIYRRLEFSLIFTLCETRKKLHAYSSITRRIDSFLSDYAFFSESQKFRFIYHFYSVRLLGVSPSDLYMKTNKFLSMYDAYVRKNERNADRIPIMFNKFGILLEALIYKCIQYDIINTDIRNNKNEAKNTQNVGNDGNAANFVKSGNVKNAANFVKSGNVKNASNFVKSGNVKNAANFVKSGNVKNASNFVKSGNVKNAANFVKSGNVKNAANFVKSENVGNSRNAEIHESNSPNHNGDKNVDPSDNVTGTKQDENETKNVMQISNILSNCILSEIISNMETMKFPNKYYPWDNKNVFEPFLELLCICKDLSCTNTMCYRSLIRYINVFIQNTILRIFVLRNYKFIDKTRIDYFKIHMLLKLICTFTPCYNSRIVKISCFFMIFIIMNKKINRYKQDYTTDWDNPDFEKLKEKYYPSSDPKKEGLSKPNHMYGVPIEVLRFFIPHYKQCRPEDFIYCPGYKPYENDYYNVDGTVRIIRDHMRYSFYVENICSKKMRHKRRNISAFNKILYKNFKSIKKQFTMFHRPNMLNLSYDWDSFQKDIMVLVNQILTSYEWHGHGAFESFVSIWRFKKRYSKSYTSTKSVEENFRNIEEDLADLDEDSTENINEPNHLDGQNNKNNRKTNNDNTLKQNHRKSRGTSVQGRKNKINRGSKGKHNSINIPKDRKTNIMSQINKFIFNKKDIKIKCEESSSSNYEEGNSSSNEENNISTDKNISNTNNKNGVSLYDNSKVYLKGDYKFSKQFHKYIHKNLLDNVDKTDRTINIISKFFGGVNKSNNVNNINSVNKENNMNKVNAVHKINAVDKVNAVNKVNSVNKLNVVNKTNVLSKLNAVYKVNSVHKMNAVNKVNAVNKVNAVNKVNVVNKKDILNKLNALYKMNAVYKMNALNKVSAVNKVSAVNKMGAVNKVCAVNRVNGVNKVNEVNEVNEVNMVNEVNELNEVNNVNAVNEVNSVNEVNEMNEVNKVNELNEVNEVNNVNEVNNVNEMNNVNEMNNMNEMNNVNVVNEVNNVNEVNNVNEMNNVNEMNNMNEMNNVNVVNEVNNVNEMNNTNELNEVNEVNNVNEVNDVNVVNEVNNVNEMNNMNELNEVNGVNEVHNTNEINEMNNVNVVNEVNNVNEMNNMNELNEVNEVNNVNEVNDVNVVNEVNNVNEMNNMNELNEVNEVNNTNEIHEMNNINEVNNTNEVNNTNEIYEMNNMNDVNNTNEINVVNAVNEVNKVNDSNNSNDANEGNNANYSNDSSNTNNNTSSSTNNSNNNTSCSSQNTTTSSENNDSLENKRNEEDEDEEDDQKDTQKEKNNLEQEDMSPYEDRNKNDEKNINEQDKFHLSNDLGKIYDTYNQGDEVVVSKNKDKLEKHLNDYKSYYYLSKATLMDKIGESQNNNNYNVCNSNELGTNESIKTNSDQNDNVKEKNDSNIFMNNDNYNSSYDNVHNDNDNNMVFKDSSRQDNMEKQKSGENKQYLNNFDNNGNDNDNDNDDNNDNDNNNNNNMNNQYNYQENNINTNYNILYTPSNCQIQNNSYMNTNEMYQPLYNTYPSNAIQENSTINNNIINVSPYMNNDNTTNNTFISGMNSNLSSNISNINNNTYSYDLYSSMNNSYLNNDIQIGNNDINSNTLTNNIVINNYVGNHHMQDSYVTQNTEYTNQISSQTCPNLQYYTHFPNHITNNNYYNVQSGINEVQTQSMSQENNVSHSNEEYMNNNAPNNNVNVYNTYEYNNNQNNKNENINDTNFLNGSSWNNNMINISNVQNSENNEIYCDNIQPNVDNSNRNQNYGISIENNNITDNNLNGSNRTTGNNTYFNNNFMYNSQNDIFAGQGNKTLLDNSNIITTGITSNEYVPNTNYVINNMNNNVYNSLESNYIGNMNNAMNQIGMNSNNVAYMNDNNLSNNNNDNNNDYDNDNNNNNNYSYDNKNDDNILNGINQKESNNVCGTLMSDSDMQRITSNVDFYNNNSSSLYTTAVSGLEFNNNNSNNLYFNNNSITGCNILNNNVENNNKITISNNMIQNEISNETNNNNSFNSMNQNNNFTNFMNINNYHGNTTLLPPQQNIQNNDVHPSNSYGNINMMNNNNSLYSNNSNYYVNSITNDVNYSMINNFNSFHNNTTEYMVPQTTYNNSLGDNGTRTTTYPNVGLNNLNVYQNMYNENNMNNTNNNIFQEYPNNIMPPYNLSNNIGHNSYSYTAYNYTNVVSNLNNNIDISTNIVDTNFNISNSNNYNVEEQTQEIVVEYNNNTDTNFNISQQNNNNNNDNINNINNMNNNNDNNNNSQKNNLSEVQVSNINTPSSYNISARRRRRIGNNGPPSAEELNRLLNIQHLTIPEIATIYGVHRTTIARWCNIRNITSNSMNNSPGKRRKNEDNK.

10 disordered regions span residues 1–29 (MKRG…DNSN), 59–164 (LHNS…INDN), 203–306 (SKRK…NIGK), 949–980 (NAEI…QDEN), 1323–1390 (DEDS…KDRK), 1415–1445 (SSSN…NNKN), 1939–2046 (KVND…QDKF), 2115–2216 (TNES…QYNY), 2599–2637 (AYMN…DDNI), and 2959–3019 (QQNN…NNGP). Polar residues predominate over residues 14-29 (CPSNGMASSQRNDNSN). Residues 59-84 (LHNSSSRESKDMKLSEEPRHINEKCI) are compositionally biased toward basic and acidic residues. Composition is skewed to low complexity over residues 85–94 (NDNNKINNNN) and 114–127 (NNNN…TKNN). 5 stretches are compositionally biased toward polar residues: residues 128-137 (IFFQTNNPDT), 148-157 (KQENTSSSLH), 209-229 (NSNN…NNIT), 237-252 (TSSI…NTVH), and 949-960 (NAEIHESNSPNH). Residues 1368 to 1380 (RKNKINRGSKGKH) show a composition bias toward basic residues. Low complexity predominate over residues 1415 to 1433 (SSSNYEEGNSSSNEENNIS). Residues 1434 to 1445 (TDKNISNTNNKN) show a composition bias toward polar residues. The segment covering 1939 to 1993 (KVNDSNNSNDANEGNNANYSNDSSNTNNNTSSSTNNSNNNTSCSSQNTTTSSENN) has biased composition (low complexity). Basic and acidic residues-rich tracts occupy residues 2012–2021 (KDTQKEKNNL) and 2029–2046 (YEDR…QDKF). Over residues 2115-2126 (TNESIKTNSDQN) the composition is skewed to polar residues. Over residues 2139 to 2160 (MNNDNYNSSYDNVHNDNDNNMV) the composition is skewed to low complexity. Over residues 2163-2177 (DSSRQDNMEKQKSGE) the composition is skewed to basic and acidic residues. The segment covering 2192–2201 (NDNDNDDNND) has biased composition (acidic residues). Low complexity-rich tracts occupy residues 2202–2216 (NDNN…QYNY), 2602–2630 (NDNN…YSYD), and 2959–2989 (QQNN…QKNN). The span at 2990 to 3006 (LSEVQVSNINTPSSYNI) shows a compositional bias: polar residues. Positions 2991 to 3078 (SEVQVSNINT…GKRRKNEDNK (88 aa)) are DNA-binding.

Homodimer.

It localises to the nucleus. Its subcellular location is the chromosome. In terms of biological role, transcriptional regulator which binds to the DNA motifs 5'-GTGCACAC-3' (motif A) and 5'-[GTA]TGTA[CT][GA]TAC-3' (motif B) of genes essential for early gametocyte development, including those critical for the expansion of the inner membrane complex (IMC). The protein is Homeobox-like protein HDP1 of Plasmodium falciparum (isolate NF54).